Reading from the N-terminus, the 581-residue chain is Pyridine nucleotide-disulfide oxidoreductase domain-containing protein 2 (581 aa).

38 to 71 (VVIGAGHNGLVAAAYLQRLGVNTAVFERRHVIGG) contributes to the FAD binding site.

Belongs to the carotenoid/retinoid oxidoreductase family. In terms of assembly, interacts with COX5B; this interaction may contribute to localize PYROXD2 to the inner face of the inner mitochondrial membrane.

Its subcellular location is the mitochondrion matrix. Functionally, probable oxidoreductase that may play a role as regulator of mitochondrial function. The protein is Pyridine nucleotide-disulfide oxidoreductase domain-containing protein 2 of Mus musculus (Mouse).